The primary structure comprises 983 residues: Inner tegument protein (983 aa).

Positions 474-983 are interaction with large tegument protein; that stretch reads LNVNTHFAVQ…TSVSLPPASP (510 aa). The interval 901-932 is disordered; sequence APWESAPQPPRLRMTPDTDHEESTAGATSVPE. Over residues 914 to 923 the composition is skewed to basic and acidic residues; the sequence is MTPDTDHEES.

It belongs to the herpesviridae inner tegument protein family. As to quaternary structure, interacts (via C-terminus) with the large tegument protein/LTP (via N-terminus).

The protein localises to the virion tegument. It is found in the host cytoplasm. Its subcellular location is the host nucleus. The protein resides in the host Golgi apparatus. It localises to the host trans-Golgi network. In terms of biological role, plays an essential role in cytoplasmic secondary envelopment during viral egress. Interacts with the capsid via the large tegument protein/LTP and participates in its transport to the host trans-Golgi network (TGN) where secondary envelopment occurs. Modulates tegumentation and capsid accumulation at the viral assembly complex. The chain is Inner tegument protein (UL47) from Homo sapiens (Human).